A 608-amino-acid polypeptide reads, in one-letter code: MQATIFSPRATLFPCKPLLPSHNVNSRRPSIISCSAQSVTADPSPPITDTNKLNKYSSRITEPKSQGGSQAILHGVGLSDDDLLKPQIGISSVWYEGNTCNMHLLKLSEAVKEGVENAGMVGFRFNTIGVSDAISMGTRGMCFSLQSRDLIADSIETVMSAQWYDGNISIPGCDKNMPGTIMAMGRLNRPGIMVYGGTIKPGHFQDKTYDIVSAFQSYGEFVSGSISDEQRKTVLHHSCPGAGACGGMYTANTMASAIEAMGMSLPYSSSIPAEDPLKLDECRLAGKYLLELLKMDLKPRDIITPKSLRNAMVSVMALGGSTNAVLHLIAIARSVGLELTLDDFQKVSDAVPFLADLKPSGKYVMEDIHKIGGTPAVLRYLLELGLMDGDCMTVTGQTLAQNLENVPSLTEGQEIIRPLSNPIKETGHIQILRGDLAPDGSVAKITGKEGLYFSGPALVFEGEESMLAAISADPMSFKGTVVVIRGEGPKGGPGMPEMLTPTSAIMGAGLGKECALLTDGRFSGGSHGFVVGHICPEAQEGGPIGLIKNGDIITIDIGKKRIDTQVSPEEMNDRRKKWTAPAYKVNRGVLYKYIKNVQSASDGCVTDE.

The transit peptide at 1–34 (MQATIFSPRATLFPCKPLLPSHNVNSRRPSIISC) directs the protein to the chloroplast. Ser35 bears the N-acetylserine mark. A [2Fe-2S] cluster-binding site is contributed by Cys100. Asp132 contributes to the Mg(2+) binding site. Cys173 is a binding site for [2Fe-2S] cluster. Asp174 is a binding site for Mg(2+). Cys245 serves as a coordination point for [2Fe-2S] cluster. Position 497 (Glu497) interacts with Mg(2+). Ser523 functions as the Proton acceptor in the catalytic mechanism.

This sequence belongs to the IlvD/Edd family. Requires [2Fe-2S] cluster as cofactor. Mg(2+) is required as a cofactor.

Its subcellular location is the plastid. The protein resides in the chloroplast. The catalysed reaction is (2R)-2,3-dihydroxy-3-methylbutanoate = 3-methyl-2-oxobutanoate + H2O. The enzyme catalyses (2R,3R)-2,3-dihydroxy-3-methylpentanoate = (S)-3-methyl-2-oxopentanoate + H2O. It functions in the pathway amino-acid biosynthesis; L-isoleucine biosynthesis; L-isoleucine from 2-oxobutanoate: step 3/4. Its pathway is amino-acid biosynthesis; L-valine biosynthesis; L-valine from pyruvate: step 3/4. With respect to regulation, is highly competitively inhibited by the fungal sesquiterpenoid aspterric acid, which is effective as a herbicide in spray applications. Functions in the biosynthesis of branched-chain amino acids. Catalyzes the dehydration of (2R,3R)-2,3-dihydroxy-3-methylpentanoate (2,3-dihydroxy-3-methylvalerate) into 2-oxo-3-methylpentanoate (2-oxo-3-methylvalerate) and of (2R)-2,3-dihydroxy-3-methylbutanoate (2,3-dihydroxyisovalerate) into 2-oxo-3-methylbutanoate (2-oxoisovalerate), the penultimate precursor to L-isoleucine and L-valine, respectively. The protein is Dihydroxy-acid dehydratase, chloroplastic of Arabidopsis thaliana (Mouse-ear cress).